Consider the following 261-residue polypeptide: CD40 ligand (261 aa).

Residues Met-1–Lys-22 lie on the Cytoplasmic side of the membrane. Residues Ile-23–Ala-43 form a helical; Signal-anchor for type II membrane protein membrane-spanning segment. Residues Val-44–Leu-261 are Extracellular-facing. The 140-residue stretch at Ile-122–Leu-261 folds into the THD domain. Cys-178 and Cys-218 form a disulfide bridge. N-linked (GlcNAc...) asparagine glycosylation is present at Asn-240.

The protein belongs to the tumor necrosis factor family. Homotrimer. Interacts with CD28. CD40 ligand, soluble form: Exists as either a monomer or a homotrimer. Forms a ternary complex between CD40 and integrins for CD40-CD40LG signaling. In terms of processing, the soluble form derives from the membrane form by proteolytic processing.

The protein localises to the cell membrane. Its subcellular location is the cell surface. It localises to the secreted. Functionally, cytokine that acts as a ligand to CD40/TNFRSF5. Costimulates T-cell proliferation and cytokine production. Its cross-linking on T-cells generates a costimulatory signal which enhances the production of IL4 and IL10 in conjunction with the TCR/CD3 ligation and CD28 costimulation. Induces the activation of NF-kappa-B. Induces the activation of kinases MAPK8 and PAK2 in T-cells. Mediates B-cell proliferation in the absence of co-stimulus as well as IgE production in the presence of IL4. Involved in immunoglobulin class switching. Acts as a ligand for integrins, specifically ITGA5:ITGB1 and ITGAV:ITGB3; both integrins and the CD40 receptor are required for activation of CD40-CD40LG signaling, which have cell-type dependent effects, such as B-cell activation, NF-kappa-B signaling and anti-apoptotic signaling. This is CD40 ligand (CD40LG) from Callithrix jacchus (White-tufted-ear marmoset).